A 633-amino-acid chain; its full sequence is Probable potassium transport system protein Kup 2 (633 aa).

12 consecutive transmembrane segments (helical) span residues 18–38 (FVGLVVGAIGVVYGDIGTSPL), 61–81 (LISLMIWTLTIIVTFKYVLFL), 107–127 (VPVLFFAGLIGSALFIGDAMI), 143–163 (ITPAFAEYVPPLSAAIMIVLF), 176–196 (FFGPITVLWFFAMAAGGVIHI), 211–231 (ALSFLAHAGTVGLIVLGAVFL), 255–275 (WFVLVFPALLLNYLGQGALVL), 293–313 (ALLPVVLLATLATIIASQAVI), 345–365 (IYVPSVNLLLLTGVLMLIFSF), 371–391 (LATAYGISVTGAMVITTMLAF), 402–422 (FMLASAALLPLFVIEVVFLAA), and 429–449 (DGGWVPVALALAIMTLMWTWT).

It belongs to the HAK/KUP transporter (TC 2.A.72) family.

It is found in the cell inner membrane. It catalyses the reaction K(+)(in) + H(+)(in) = K(+)(out) + H(+)(out). Its function is as follows. Transport of potassium into the cell. Likely operates as a K(+):H(+) symporter. The protein is Probable potassium transport system protein Kup 2 of Rhizobium etli (strain ATCC 51251 / DSM 11541 / JCM 21823 / NBRC 15573 / CFN 42).